Here is a 316-residue protein sequence, read N- to C-terminus: Conjugated bile acid hydrolase (316 aa).

The active-site Nucleophile is Cys2. Deoxycholate contacts are provided by Cys2 and Arg18. Asn81 contributes to the taurine binding site.

Belongs to the peptidase C59 family.

It carries out the reaction cholate + taurine = taurocholate + H2O. The enzyme catalyses taurochenodeoxycholate + H2O = chenodeoxycholate + taurine. It catalyses the reaction taurodeoxycholate + H2O = deoxycholate + taurine. The catalysed reaction is glycocholate + H2O = cholate + glycine. It carries out the reaction glycodeoxycholate + H2O = deoxycholate + glycine. It functions in the pathway lipid metabolism; bile acid biosynthesis. In terms of biological role, bile salt hydrolase that catalyzes the deconjugation of glycine- and taurine-linked bile salts, which occurs naturally in the intestines of humans, releasing amino acid residues and deconjugated bile salts (bile acids). Can hydrolyze the amide bond in the bile salts taurocholate (TCA), taurodeoxycholate (TDCA), taurochenodeoxycholate (TCDCA), glycocholate (GCA) and glycodeoxycholate (GDCA). Shows highest activity toward the taurine-conjugated bile salts TCA and TCDCA. The activity toward the other three substrates (TDCA, GCA and GDCA) is relatively low. This enzyme likely contributes to bile salt resistance of the strain and may be associated with survival capability of strain JCM1131 within the human intestine by bile detoxification. The chain is Conjugated bile acid hydrolase from Lactobacillus gasseri (strain ATCC 33323 / DSM 20243 / BCRC 14619 / CIP 102991 / JCM 1131 / KCTC 3163 / NCIMB 11718 / NCTC 13722 / AM63).